The following is a 1052-amino-acid chain: Membrane-bound transcription factor site-1 protease (1052 aa).

The signal sequence occupies residues 1–17; sequence MKLVNIWLLLLVVLLCG. Positions 18-186 are excised as a propeptide; the sequence is KKHLGDRLEK…TGRHSSRRLL (169 aa). Ser-168 carries the phosphoserine; by FAM20C modification. The Lumenal segment spans residues 187–998; the sequence is RAIPRQVAQT…IMPGRYNQEV (812 aa). Residues 190-472 form the Peptidase S8 domain; the sequence is PRQVAQTLQA…HGKLDLLRAY (283 aa). Asp-218 acts as the Charge relay system in catalysis. An N-linked (GlcNAc...) asparagine glycan is attached at Asn-236. His-249 acts as the Charge relay system in catalysis. Asn-305 carries N-linked (GlcNAc...) asparagine glycosylation. The Charge relay system role is filled by Ser-414. Asn-515 and Asn-728 each carry an N-linked (GlcNAc...) asparagine glycan. A compositionally biased stretch (polar residues) spans 877-887; sequence PSLSHSGNRQR. Positions 877 to 899 are disordered; it reads PSLSHSGNRQRPPSGAGSVTPER. Asn-939 carries N-linked (GlcNAc...) asparagine glycosylation. Residues 999–1021 traverse the membrane as a helical segment; that stretch reads GQTIPVFAFLGAMVVLAFFVVQI. Over 1022 to 1052 the chain is Cytoplasmic; it reads NKAKSRPKRRKPRVKRPQLMQQVHPPKTPSV. Over residues 1027-1037 the composition is skewed to basic residues; that stretch reads RPKRRKPRVKR. A disordered region spans residues 1027–1052; sequence RPKRRKPRVKRPQLMQQVHPPKTPSV.

Belongs to the peptidase S8 family. As to quaternary structure, interacts with LYSET; this interaction bridges GNPTAB to MBTPS1. The cofactor is Ca(2+). The 148 kDa zymogen is processed progressively into two membrane-bound 120 and 106 kDa forms in the endoplasmic reticulum, and late into a secreted 98 kDa form. The propeptide is autocatalytically removed through an intramolecular cleavage after Leu-186. Further cleavage generates 14, 10, and 8 kDa intermediates. Widely expressed.

It is found in the endoplasmic reticulum membrane. Its subcellular location is the golgi apparatus membrane. The catalysed reaction is Processes precursors containing basic and hydrophobic/aliphatic residues at P4 and P2, respectively, with a relatively relaxed acceptance of amino acids at P1 and P3.. With respect to regulation, inhibited by divalent copper and zinc ions, but not by nickel or cobalt. Inhibited by its prosegment, but not smaller fragments. Inhibited by 4-(2-aminoethyl)benzenesulfonyl fluoride (AEBSF), a serine protease inhibitor. Serine protease that cleaves after hydrophobic or small residues, provided that Arg or Lys is in position P4: known substrates include SREBF1/SREBP1, SREBF2/SREBP2, BDNF, GNPTAB, ATF6, ATF6B and FAM20C. Cleaves substrates after Arg-Ser-Val-Leu (SREBP2), Arg-His-Leu-Leu (ATF6), Arg-Gly-Leu-Thr (BDNF) and its own propeptide after Arg-Arg-Leu-Leu. Catalyzes the first step in the proteolytic activation of the sterol regulatory element-binding proteins (SREBPs) SREBF1/SREBP1 and SREBF2/SREBP2. Also mediates the first step in the proteolytic activation of the cyclic AMP-dependent transcription factor ATF-6 (ATF6 and ATF6B). Mediates the protein cleavage of GNPTAB into subunit alpha and beta, thereby participating in biogenesis of lysosomes. Cleaves the propeptide from FAM20C which is required for FAM20C secretion from the Golgi apparatus membrane and for enhancement of FAM20C kinase activity, promoting osteoblast differentiation and biomineralization. Involved in the regulation of M6P-dependent Golgi-to-lysosome trafficking of lysosomal enzymes. It is required for the activation of CREB3L2/BBF2H7, a transcriptional activator of MIA3/TANGO and other genes controlling mega vesicle formation. Therefore, it plays a key role in the regulation of mega vesicle-mediated collagen trafficking. In astrocytes and osteoblasts, upon DNA damage and ER stress, mediates the first step of the regulated intramembrane proteolytic activation of the transcription factor CREB3L1, leading to the inhibition of cell-cycle progression. The protein is Membrane-bound transcription factor site-1 protease of Homo sapiens (Human).